We begin with the raw amino-acid sequence, 370 residues long: tRNA-specific 2-thiouridylase MnmA 1 (370 aa).

ATP contacts are provided by residues G9 to S16 and M35. The interaction with target base in tRNA stretch occupies residues N95–D97. C100 serves as the catalytic Nucleophile. Cysteines 100 and 196 form a disulfide. ATP is bound at residue G124. The tract at residues K146 to Q148 is interaction with tRNA. The Cysteine persulfide intermediate role is filled by C196. An interaction with tRNA region spans residues R306–Y307.

Belongs to the MnmA/TRMU family.

The protein localises to the cytoplasm. It catalyses the reaction S-sulfanyl-L-cysteinyl-[protein] + uridine(34) in tRNA + AH2 + ATP = 2-thiouridine(34) in tRNA + L-cysteinyl-[protein] + A + AMP + diphosphate + H(+). In terms of biological role, catalyzes the 2-thiolation of uridine at the wobble position (U34) of tRNA, leading to the formation of s(2)U34. This Geobacillus kaustophilus (strain HTA426) protein is tRNA-specific 2-thiouridylase MnmA 1.